The chain runs to 500 residues: Lysine--tRNA ligase (500 aa).

Glutamate 410 and glutamate 417 together coordinate Mg(2+).

The protein belongs to the class-II aminoacyl-tRNA synthetase family. Homodimer. Mg(2+) serves as cofactor.

Its subcellular location is the cytoplasm. The enzyme catalyses tRNA(Lys) + L-lysine + ATP = L-lysyl-tRNA(Lys) + AMP + diphosphate. The sequence is that of Lysine--tRNA ligase from Shewanella denitrificans (strain OS217 / ATCC BAA-1090 / DSM 15013).